Reading from the N-terminus, the 550-residue chain is Zinc finger protein 426 (550 aa).

One can recognise a KRAB domain in the interval 39–110; it reads VSFEDVIVDF…KIVFPEWKLQ (72 aa). C2H2-type zinc fingers lie at residues 219–241, 274–296, 302–324, 330–352, 358–380, 386–408, 414–436, 442–464, 470–492, 498–522, and 528–550; these read FECS…QRTH, HRCK…MRTH, YECK…GRTH, YVCS…VRSH, YGCK…IRTH, FVCV…LKLH, CECK…MRTH, YTCK…MRIH, YECK…ERTH, YECK…SHTH, and YKCQ…ERIH.

It localises to the nucleus. Its function is as follows. May be involved in transcriptional regulation. The chain is Zinc finger protein 426 (Znf426) from Mus musculus (Mouse).